We begin with the raw amino-acid sequence, 151 residues long: MRVWIDADACPRAAKDQVVKFALKRQFEVVLVAGQSQIKPSFSCVKLIVVPSGPDAADDYLVEHAVPGELVICSDVPLADRLVKNGVTALDPRGKEFSPANMSERLAVRNLFTDLREQGQMGGGPPPHGEKEKQAFANALDRILTRLMRQA.

The protein belongs to the UPF0178 family.

The chain is UPF0178 protein PFLU_5917 from Pseudomonas fluorescens (strain SBW25).